The following is a 150-amino-acid chain: Plasmin C (150 aa).

Positions 1 to 14 (MRSFFLLCALVAVC) are cleaved as a signal peptide.

The polypeptide is Plasmin C (PLSC) (Physarum polycephalum (Slime mold)).